Reading from the N-terminus, the 85-residue chain is Small ribosomal subunit protein uS17 (85 aa).

The protein belongs to the universal ribosomal protein uS17 family. In terms of assembly, part of the 30S ribosomal subunit.

In terms of biological role, one of the primary rRNA binding proteins, it binds specifically to the 5'-end of 16S ribosomal RNA. The sequence is that of Small ribosomal subunit protein uS17 from Rhodospirillum centenum (strain ATCC 51521 / SW).